The chain runs to 342 residues: Foldase protein PrsA (342 aa).

The first 22 residues, 1–22 (MVSVKKIVASALVGVLMFSAVG), serve as a signal peptide directing secretion. Cysteine 23 carries the N-palmitoyl cysteine lipid modification. Cysteine 23 carries the S-diacylglycerol cysteine lipid modification. Residues 189 to 284 (DSGVLTKHLL…FGYHIIQAGA (96 aa)) form the PpiC domain.

This sequence belongs to the PrsA family.

It is found in the cell membrane. The enzyme catalyses [protein]-peptidylproline (omega=180) = [protein]-peptidylproline (omega=0). In terms of biological role, plays a major role in protein secretion by helping the post-translocational extracellular folding of several secreted proteins. This is Foldase protein PrsA from Clostridium perfringens (strain ATCC 13124 / DSM 756 / JCM 1290 / NCIMB 6125 / NCTC 8237 / Type A).